The chain runs to 685 residues: E3 ubiquitin ligase Rnf157 (685 aa).

G2 carries N-myristoyl glycine lipidation. An RING-type zinc finger spans residues 276-315; that stretch reads ECVVCLSDVRDTLILPCRHLCLCNTCADTLRYQANNCPIC. The D-box 1 motif lies at 329–332; it reads RKKL. Disordered regions lie at residues 339 to 361, 433 to 584, and 650 to 672; these read SFNP…ENIP, LSKS…AGEQ, and LGGR…EASA. The segment covering 434–443 has biased composition (low complexity); the sequence is SKSISQNSSV. Over residues 478 to 537 the composition is skewed to polar residues; the sequence is ESENLTLSSSGAVDQSSCTGTPLSSTISSPEDPASSSLAQSVMSMASSQISTDTVSSMSG. Positions 552 to 561 are enriched in low complexity; it reads PSPRAASRAP. Residues 657–660 carry the D-box 2 motif; it reads ARPR.

As to quaternary structure, interacts with APBB1. Interacts with CHD1; CHD1-binding controls RNF157 stability. Also interacts with ATRN, MEGF8, TECR, MSI2, PLRG1, BYSL, MTERF3, PSMA1, MRPS18B, PRPF4, FASTKD2, SLC25A1, SMU1, CNOT9, MRPS2, MAGT1, FXR2, EMD, PSMD8, HDAC1, RAN, HSD17B12, TXNDC5 and MRPL19.

Its subcellular location is the cytoplasm. The catalysed reaction is S-ubiquitinyl-[E2 ubiquitin-conjugating enzyme]-L-cysteine + [acceptor protein]-L-lysine = [E2 ubiquitin-conjugating enzyme]-L-cysteine + N(6)-ubiquitinyl-[acceptor protein]-L-lysine.. E3 ubiquitin ligase that ubiquitinates APBB1 for its degradation by the proteasome and thus prevents apoptosis and promotes survival of neurons. Has a dual role in neurons as it is also required for dendrite growth and maintenance for which its ligase activity is not critical. May act as a scaffold molecule to regulate this process. Acts as a downstream effector of the interconnected PI3K and MAPK signaling pathways and thus participates in the regulation of the cell cycle. In Mus musculus (Mouse), this protein is E3 ubiquitin ligase Rnf157 (Rnf157).